The following is a 217-amino-acid chain: Adenylate kinase (217 aa).

ATP is bound at residue 10–15 (GAGKGT). Residues 30-59 (STGDMFREAVAAGTELGVKVQNILSSGALV) form an NMP region. AMP is bound by residues T31, R36, 57–59 (ALV), 85–88 (GYPR), and Q92. The tract at residues 126–163 (SRRICPKCGKIYNLISMPPVSDQICDDCGEQLVIREDD) is LID. Position 127 (R127) interacts with ATP. Positions 130 and 133 each coordinate Zn(2+). 136 to 137 (IY) provides a ligand contact to ATP. Zn(2+) contacts are provided by C150 and C153. AMP-binding residues include R160 and R171. R199 lines the ATP pocket.

It belongs to the adenylate kinase family. Monomer.

It localises to the cytoplasm. The catalysed reaction is AMP + ATP = 2 ADP. It participates in purine metabolism; AMP biosynthesis via salvage pathway; AMP from ADP: step 1/1. In terms of biological role, catalyzes the reversible transfer of the terminal phosphate group between ATP and AMP. Plays an important role in cellular energy homeostasis and in adenine nucleotide metabolism. This Pseudothermotoga lettingae (strain ATCC BAA-301 / DSM 14385 / NBRC 107922 / TMO) (Thermotoga lettingae) protein is Adenylate kinase.